Consider the following 315-residue polypeptide: MFQEIDIKSLKGKSKVARLRIKPDVNRTVIRKPKWIRTKHIFGSKVDQLKSTLRAQKLFTVCEEAQCPNLVECFNHGTATFMIMGQICTRRCPFCDVAHGKPRTLDIDEPKHLADTIKKMRLKYVVITSVDRDDLHDGGVQHFKMCIDNIRLSTPKVKIEILTPDFKGRIDKALKVFKSCPPDVFNHNLETVPSLYPKVRPGANYEYSLKLLQKFKQQHPLVISKSGLMLGVGESEKQVINVLKDLRRHNVDMLTIGQYLQPSKYHLAVETYIHPNQFDKYRKIALKLGFIRVASGPMVRSSYHANLQIKGKLII.

7 residues coordinate [4Fe-4S] cluster: cysteine 62, cysteine 67, cysteine 73, cysteine 88, cysteine 92, cysteine 95, and serine 302. The Radical SAM core domain occupies 74–292 (FNHGTATFMI…KIALKLGFIR (219 aa)).

Belongs to the radical SAM superfamily. Lipoyl synthase family. [4Fe-4S] cluster serves as cofactor.

The protein localises to the cytoplasm. The enzyme catalyses [[Fe-S] cluster scaffold protein carrying a second [4Fe-4S](2+) cluster] + N(6)-octanoyl-L-lysyl-[protein] + 2 oxidized [2Fe-2S]-[ferredoxin] + 2 S-adenosyl-L-methionine + 4 H(+) = [[Fe-S] cluster scaffold protein] + N(6)-[(R)-dihydrolipoyl]-L-lysyl-[protein] + 4 Fe(3+) + 2 hydrogen sulfide + 2 5'-deoxyadenosine + 2 L-methionine + 2 reduced [2Fe-2S]-[ferredoxin]. The protein operates within protein modification; protein lipoylation via endogenous pathway; protein N(6)-(lipoyl)lysine from octanoyl-[acyl-carrier-protein]: step 2/2. Its function is as follows. Catalyzes the radical-mediated insertion of two sulfur atoms into the C-6 and C-8 positions of the octanoyl moiety bound to the lipoyl domains of lipoate-dependent enzymes, thereby converting the octanoylated domains into lipoylated derivatives. The sequence is that of Lipoyl synthase from Vesicomyosocius okutanii subsp. Calyptogena okutanii (strain HA).